Consider the following 338-residue polypeptide: MLGRCFPPDTKEKQQLRMTKLCDPAESELSPFLITLILAVLLAEYLIGIIANGFIMAIHAAEWVQNKAVSTSGRILVFLSVSRIALQSLMMLEITISSTSLSFYSEDAVYYAFKISFIFLNFCSLWFAAWLSFFYFVKIANFSYPLFLKLRWRITGLIPWLLWLSVFISFSHSMFCINICTVYCNNSFPIHSSNSTKKTYLSEINVVGLAFFFNLGIVTPLIMFILTATLLILSLKRHTLHMGSNATGSNDPSMEAHMGAIKAISYFLILYIFNAVALFIYLSNMFDINSLWNNLCQIIMAAYPASHSILLIQDNPGLRRAWKRLQLRLHLYPKEWTL.

At 1-30 (MLGRCFPPDTKEKQQLRMTKLCDPAESELS) the chain is on the extracellular side. The chain crosses the membrane as a helical span at residues 31-51 (PFLITLILAVLLAEYLIGIIA). At 52-74 (NGFIMAIHAAEWVQNKAVSTSGR) the chain is on the cytoplasmic side. A helical membrane pass occupies residues 75–95 (ILVFLSVSRIALQSLMMLEIT). The Extracellular portion of the chain corresponds to 96 to 116 (ISSTSLSFYSEDAVYYAFKIS). The helical transmembrane segment at 117–137 (FIFLNFCSLWFAAWLSFFYFV) threads the bilayer. At 138-156 (KIANFSYPLFLKLRWRITG) the chain is on the cytoplasmic side. Residues 157–177 (LIPWLLWLSVFISFSHSMFCI) form a helical membrane-spanning segment. The Extracellular segment spans residues 178–205 (NICTVYCNNSFPIHSSNSTKKTYLSEIN). Residues N185 and N194 are each glycosylated (N-linked (GlcNAc...) asparagine). Residues 206–226 (VVGLAFFFNLGIVTPLIMFIL) traverse the membrane as a helical segment. Topologically, residues 227-262 (TATLLILSLKRHTLHMGSNATGSNDPSMEAHMGAIK) are cytoplasmic. Residues 263–283 (AISYFLILYIFNAVALFIYLS) traverse the membrane as a helical segment. Over 284-291 (NMFDINSL) the chain is Extracellular. Residues 292 to 312 (WNNLCQIIMAAYPASHSILLI) form a helical membrane-spanning segment. Over 313 to 338 (QDNPGLRRAWKRLQLRLHLYPKEWTL) the chain is Cytoplasmic.

It belongs to the G-protein coupled receptor T2R family. Expressed in subsets of taste receptor cells of the tongue and exclusively in gustducin-positive cells.

It localises to the membrane. Functionally, receptor that may play a role in the perception of bitterness and is gustducin-linked. May play a role in sensing the chemical composition of the gastrointestinal content. The activity of this receptor may stimulate alpha gustducin, mediate PLC-beta-2 activation and lead to the gating of TRPM5. In Homo sapiens (Human), this protein is Taste receptor type 2 member 39 (TAS2R39).